The sequence spans 371 residues: Protein disulfide isomerase-like 2-2 (371 aa).

The first 27 residues, 1-27, serve as a signal peptide directing secretion; the sequence is MAIPRISPRKTLPLFAALALALAWAFA. Thioredoxin domains lie at 28 to 143 and 147 to 262; these read APAF…TEGG and KLAT…EKCG. Catalysis depends on nucleophile residues cysteine 64, cysteine 67, cysteine 183, and cysteine 186. 2 disulfide bridges follow: cysteine 64-cysteine 67 and cysteine 183-cysteine 186.

It belongs to the protein disulfide isomerase family.

It localises to the secreted. It catalyses the reaction Catalyzes the rearrangement of -S-S- bonds in proteins.. Functionally, acts as a protein-folding catalyst that interacts with nascent polypeptides to catalyze the formation, isomerization, and reduction or oxidation of disulfide bonds. May play a role in storage protein biogenesis. This Oryza sativa subsp. japonica (Rice) protein is Protein disulfide isomerase-like 2-2 (PDIL2-2).